A 2248-amino-acid polypeptide reads, in one-letter code: MDEFELFQQLNQTAPLVKTEEPEVPDEFQQANNNQSAPLRTGLSDLSHEIAAAKQREEEEAQRLADFMQKDMKEPAVKRKRGSEEYKKDPLESKAPLSTFGHSSRPRRSVNYASIERGDEAQAQSLVTDFGSRGNRKKPKRTRDELDENYMEENEGNSGRKKKPNAKGASRQFQVPGLPTYASQYSRPPKQEDVFKTIVPLAEDARAEGERVIGFRLDSQPAVRRASGGFRRFCAWLSDNQIFSIMQTVDKLCIVGANNEDHDEILLKSIRHVYNAMPPTFRRDWEYAARKDVFDSRLFVQNMPMPLSEISVTDPRHPPSPIARGTTVRPNCCENQPLFLNMCETIEHYLGHHDVVHLFGCDICYRVYPSRYELTKHDCKEFAEYLRQLTFKQQTLHLEAAYMYLCCSQCGLWLSVKPSGEGKKGWTYFATALMNHSCQPLVPVVAYFPKPLKDEGKGIRIQFQVMSELNIGLPLSCSECNIEEFHSVVEIEEHFKEKHEANHTCIKCGKTFGTEFMLKHHAQSHTTQTAQFANYLQMSATYQPPPSSGRLPYVGFGSSIPAIGGLTSGEVQALEASENKKSEFVEPDEYTIRKKLLRWKHAKTKKENRNITDSNEKEFSYEPGESSGEEDFQKSLLEQDNQSSSSSDSDSDSDDFTSSKQKKKRNIKIRGDLGYEHINRNKFFERPESEKEARKRIEKVYKKHVLLSRERLLDPEEALRILEESRMVHLNSIQSTLADDIAMSCIRTISLPASNCIDPLKDLLLVNKIFYFCTKCNYIFSKDPVVHCLSCEVTEDDLIEVYHAASGPHAGVRCIDPECKAHLCSVISLKTHLSDVHSKQATLELVSGELDNFSENRFDRSLMLMAKHFTQLQFDERTYLARFTDIECFMPFSGLLEAKDQPRPMPIRQQPQQIKPAYSLVRPDIIAPNELMRPYTLTPAIRPGQRIKPYKVPRTSRWYSCSWCDREYESLNQFVDHLTRFHTHPCPSCGKAFSSQNTRRTHVCSRLFAEIKGRGATLCGQCPSCPEIHQVERIFVHMLNRHFSTIEYVLATGELLPPARDVGIRYNHGENGGYGRSYESLRAIEQSVVDPRSPDYRLKQVKISALPIHGVELNRLPARDPPMGSFTVCPPKDKNIDPRLMCYMCELTFDSYDELTHHMDDHPEKWANCPFCAANTPTHFDLQKHLIQEHVVQISGQACCAFCQEHHRFMSSHILFRCKRVSRCTICGVKSNDPLANRVHIQRSHALTLRRFQCAYCIKVFVSVGEYYEHECASGGGRVYSCTCSPNKFFNSPIEFCDHFDSVHILRNKCQLCSYDAPSQDGMVKHRKTHMRSGCPKEQTKKLFILMKCLFPKHNSGYMRFIEGGPVPASYQDVDRSQMNYLMCNMGTVSPSCHKSYAQAPRTLLEALEGVASDSRSGGLQKVVNVTTRMNEPSSSDVIMLSDDEDDDCVVFEKAVPNGVAQGSSTSTPNPESSINCEVRVETSQAGYGGAQQPGYVDEDDTDLEVAQGGKSPYGEPVVKEVVDENGDDELAVVAEVENSTGTLPSSISAGREKKFKCQKCSLAFYTNGSLESHMRDHRQDAGAQLCTETYGIPVVTKASWLCRNCCVVFENQPKYQKHMAIHGDTCLTCIHCSGIAFNHTAIQNHMKSHEEKKVRYSCGTCLCTFASDLALFDHLSVAHGVSLYYFCKVCGFGSTSADSVFQHISIHNGHNYSLVQRFGACPAQLLNYDPTDELEFRSQILNKTIQLVSPSDCSHRSMLLQCETVVSCKTCHCTQAWFNYMAFNNHSEETGFPQFKNVDLANDYRRDFPLSRHLNERNALSMSQFGNAKHGSANHSHGQAQPNKRTFRHEVPYRTAAPRSSLQTNGSSMGSVTTNGGRVVRPSPPNSMNVTLRRAPPQQAPPRRIVIANSAPNNTNVLRNHVAVTTKCQFKDCDKVLHSEFDRQLHSMHSSNSSWFCRQCGHSPKSEIDLFLHYIQVHLKPAYDKHQSNSFKSNVFHLKCPIRSCTSPEFQSPKAFEKHMRTAHAAELPFEASCCDARFASKALCVKHDQEHASFLDSNGTDASCCPICGSLSMWSLPKDPHTDCLQSHIIRHGLDYRSSCRQCLKQFPADVNQDQVIAHILDTHGMSMHGNTFHCNLCTTGTKTVEEFAEHCRKAHVFHILVKSSHSTRGELVVTTGQEYENYVGLKSVTRASLNSISSQRASNAGETAQPSVLCAGSGNAALLTIAAAIGEPETSNNTAEVLTLD.

Residues 1–189 (MDEFELFQQL…TYASQYSRPP (189 aa)) are disordered. Over residues 29 to 38 (QQANNNQSAP) the composition is skewed to polar residues. Residues 54-92 (KQREEEEAQRLADFMQKDMKEPAVKRKRGSEEYKKDPLE) are compositionally biased toward basic and acidic residues. Positions 145 to 155 (ELDENYMEENE) are enriched in acidic residues. Residues 440-444 (PLVPV) carry the Required for interaction with hpl-2 isoform a motif. The segment at 503-525 (HTCIKCGKTFGTEFMLKHHAQSH) adopts a C2H2-type 1 zinc-finger fold. Positions 603–665 (KTKKENRNIT…FTSSKQKKKR (63 aa)) are disordered. Residues 605–620 (KKENRNITDSNEKEFS) are compositionally biased toward basic and acidic residues. 6 consecutive C2H2-type zinc fingers follow at residues 812-837 (VRCI…SDVH), 959-982 (YSCS…TRFH), 1140-1162 (LMCY…MDDH), 1556-1578 (FKCQ…MRDH), 1601-1623 (WLCR…MAIH), and 1657-1680 (YSCG…SVAH). Residues 1859–1877 (PRSSLQTNGSSMGSVTTNG) show a composition bias toward polar residues. The interval 1859–1900 (PRSSLQTNGSSMGSVTTNGGRVVRPSPPNSMNVTLRRAPPQQ) is disordered.

As to quaternary structure, interacts (via PLVPV motif) with chromobox protein homolog hpl-2 (via chromo (shadow subtype) domain); the interaction is direct and influences localization of hpl-2 to nuclear foci. In terms of tissue distribution, in the L3 stage, expressed in syncytial hypodermal cell 7, body wall muscles, intestinal cells, distal tip cells and many neurons.

The protein localises to the nucleus. In terms of biological role, involved in repression of vulval fate, possibly by a tumor suppressor protein Rb-mediated mechanism. May act in a common pathway with retinoblastoma-like protein homolog lin-35 and hpl-2 to influence the ER stress response in the intestine. Plays a role in recruiting chromobox protein homolog hpl-2 to specific chromatin sites. This Caenorhabditis elegans protein is Zinc finger protein lin-13 (lin-13).